Consider the following 231-residue polypeptide: Biosynthetic peptidoglycan transglycosylase (231 aa).

A helical membrane pass occupies residues 7-27 (LLFWLIVVPVLLVLLLQLYFF).

Belongs to the glycosyltransferase 51 family.

The protein resides in the cell inner membrane. The enzyme catalyses [GlcNAc-(1-&gt;4)-Mur2Ac(oyl-L-Ala-gamma-D-Glu-L-Lys-D-Ala-D-Ala)](n)-di-trans,octa-cis-undecaprenyl diphosphate + beta-D-GlcNAc-(1-&gt;4)-Mur2Ac(oyl-L-Ala-gamma-D-Glu-L-Lys-D-Ala-D-Ala)-di-trans,octa-cis-undecaprenyl diphosphate = [GlcNAc-(1-&gt;4)-Mur2Ac(oyl-L-Ala-gamma-D-Glu-L-Lys-D-Ala-D-Ala)](n+1)-di-trans,octa-cis-undecaprenyl diphosphate + di-trans,octa-cis-undecaprenyl diphosphate + H(+). It functions in the pathway cell wall biogenesis; peptidoglycan biosynthesis. Its function is as follows. Peptidoglycan polymerase that catalyzes glycan chain elongation from lipid-linked precursors. This chain is Biosynthetic peptidoglycan transglycosylase, found in Janthinobacterium sp. (strain Marseille) (Minibacterium massiliensis).